We begin with the raw amino-acid sequence, 147 residues long: Large ribosomal subunit protein uL15 (147 aa).

Positions 1-10 (MYLNTLSPNS) are enriched in polar residues. The interval 1–48 (MYLNTLSPNSKSHKKSKRVGRGIGSGFGKTSGRGHKGQKSRSGCKIRR) is disordered. The span at 11–20 (KSHKKSKRVG) shows a compositional bias: basic residues. The segment covering 21–31 (RGIGSGFGKTS) has biased composition (gly residues). Residues 32 to 47 (GRGHKGQKSRSGCKIR) are compositionally biased toward basic residues.

The protein belongs to the universal ribosomal protein uL15 family. As to quaternary structure, part of the 50S ribosomal subunit.

Functionally, binds to the 23S rRNA. The protein is Large ribosomal subunit protein uL15 of Buchnera aphidicola subsp. Baizongia pistaciae (strain Bp).